A 225-amino-acid polypeptide reads, in one-letter code: Uracil-DNA glycosylase (225 aa).

The active-site Proton acceptor is Asp-65.

This sequence belongs to the uracil-DNA glycosylase (UDG) superfamily. UNG family.

It localises to the cytoplasm. It carries out the reaction Hydrolyzes single-stranded DNA or mismatched double-stranded DNA and polynucleotides, releasing free uracil.. Excises uracil residues from the DNA which can arise as a result of misincorporation of dUMP residues by DNA polymerase or due to deamination of cytosine. This is Uracil-DNA glycosylase from Bacillus licheniformis (strain ATCC 14580 / DSM 13 / JCM 2505 / CCUG 7422 / NBRC 12200 / NCIMB 9375 / NCTC 10341 / NRRL NRS-1264 / Gibson 46).